The primary structure comprises 468 residues: Ubiquinone biosynthesis monooxygenase COQ6, mitochondrial (468 aa).

The N-terminal 28 residues, 1 to 28 (MAARLVSRCGAVRAAPHSGPLVSWRRWS), are a transit peptide targeting the mitochondrion.

Belongs to the UbiH/COQ6 family. Component of a multi-subunit COQ enzyme complex, composed of at least COQ3, COQ4, COQ5, COQ6, COQ7 and COQ9. Interacts with COQ8B and COQ7. FAD serves as cofactor. As to expression, widely expressed.

The protein resides in the mitochondrion inner membrane. The protein localises to the golgi apparatus. Its subcellular location is the cell projection. The enzyme catalyses 4-hydroxy-3-(all-trans-decaprenyl)benzoate + 2 reduced [2Fe-2S]-[ferredoxin] + O2 + 2 H(+) = 3,4-dihydroxy-5-(all-trans-decaprenyl)benzoate + 2 oxidized [2Fe-2S]-[ferredoxin] + H2O. The catalysed reaction is 2-methoxy-6-(all-trans-decaprenyl)phenol + 2 reduced [2Fe-2S]-[ferredoxin] + O2 + 2 H(+) = 2-methoxy-6-(all-trans-decaprenyl)benzene-1,4-diol + 2 oxidized [2Fe-2S]-[ferredoxin] + H2O. Its pathway is cofactor biosynthesis; ubiquinone biosynthesis. FAD-dependent monooxygenase required for two non-consecutive steps during ubiquinone biosynthesis. Required for the C5-ring hydroxylation during ubiquinone biosynthesis by catalyzing the hydroxylation of 4-hydroxy-3-(all-trans-decaprenyl)benzoic acid to 3,4-dihydroxy-5-(all-trans-decaprenyl)benzoic acid. Also acts downstream of COQ4, for the C1-hydroxylation during ubiquinone biosynthesis by catalyzing the hydroxylation of 2-methoxy-6-(all-trans-decaprenyl)phenol to 2-methoxy-6-(all-trans-decaprenyl)benzene-1,4-diol. The electrons required for the hydroxylation reaction are funneled indirectly to COQ6 from NADPH via a ferredoxin/ferredoxin reductase system composed of FDX2 and FDXR. The chain is Ubiquinone biosynthesis monooxygenase COQ6, mitochondrial from Homo sapiens (Human).